Reading from the N-terminus, the 217-residue chain is Pre-mRNA-splicing factor sap62 (217 aa).

The segment at 54–84 adopts a Matrin-type zinc-finger fold; the sequence is FECRLCLTTHANENSYLTHTQGKKHQTNLAR.

This sequence belongs to the SF3A2 family. As to quaternary structure, belongs to the 40S cdc5-associated complex (or cwf complex), a spliceosome sub-complex reminiscent of a late-stage spliceosome composed of the U2, U5 and U6 snRNAs and at least brr2, cdc5, cwf2/prp3, cwf3/syf1, cwf4/syf3, cwf5/ecm2, spp42/cwf6, cwf7/spf27, cwf8, cwf9, cwf10, cwf11, cwf12, prp45/cwf13, cwf14, cwf15, cwf16, cwf17, cwf18, cwf19, cwf20, cwf21, cwf22, cwf23, cwf24, cwf25, cwf26, cyp7/cwf27, cwf28, cwf29/ist3, lea1, msl1, prp5/cwf1, prp10, prp12/sap130, prp17, prp22, sap61, sap62, sap114, sap145, slu7, smb1, smd1, smd3, smf1, smg1 and syf2.

The protein resides in the nucleus. It localises to the cytoplasm. Its function is as follows. Involved in mRNA splicing where it associates with cdc5 and the other cwf proteins as part of the spliceosome. The polypeptide is Pre-mRNA-splicing factor sap62 (sap62) (Schizosaccharomyces pombe (strain 972 / ATCC 24843) (Fission yeast)).